A 391-amino-acid polypeptide reads, in one-letter code: 3-ketoacyl-CoA thiolase (391 aa).

The active-site Acyl-thioester intermediate is cysteine 95. Catalysis depends on proton acceptor residues histidine 347 and cysteine 377.

Belongs to the thiolase-like superfamily. Thiolase family. Heterotetramer of two alpha chains (FadB) and two beta chains (FadA).

It localises to the cytoplasm. It carries out the reaction an acyl-CoA + acetyl-CoA = a 3-oxoacyl-CoA + CoA. The protein operates within lipid metabolism; fatty acid beta-oxidation. Its function is as follows. Catalyzes the final step of fatty acid oxidation in which acetyl-CoA is released and the CoA ester of a fatty acid two carbons shorter is formed. The polypeptide is 3-ketoacyl-CoA thiolase (Saccharophagus degradans (strain 2-40 / ATCC 43961 / DSM 17024)).